The sequence spans 597 residues: Fructan 1-exohydrolase (597 aa).

The signal sequence occupies residues 1 to 15 (MAQAWAFLLPVLVFG). D76 is a catalytic residue. N-linked (GlcNAc...) asparagine glycosylation is found at N169, N237, and N249. C447 and C493 are oxidised to a cystine. The N-linked (GlcNAc...) asparagine glycan is linked to N568.

The protein belongs to the glycosyl hydrolase 32 family.

It carries out the reaction Hydrolysis of terminal, non-reducing (2-&gt;1)-linked beta-D-fructofuranose residues in fructans.. Inhibited by sucrose. In terms of biological role, hydrolyzes inulin-type beta-(2,1)-fructans. May play a role as a beta-(2,1)-trimmer during graminan biosynthesis. The polypeptide is Fructan 1-exohydrolase (Triticum urartu (Red wild einkorn)).